We begin with the raw amino-acid sequence, 446 residues long: AP-2 complex subunit mu (446 aa).

Phosphoserine occurs at positions 145, 151, and 152. Position 157 is a phosphothreonine (Thr-157). The MHD domain maps to 177–445; that stretch reads KNSIYIDIVE…STRAGTCEIR (269 aa).

It belongs to the adaptor complexes medium subunit family. As to quaternary structure, adaptor protein complex 2 (AP-2) is a heterotetramer composed of two large adaptins (alpha-type subunit apl3 and beta-type subunit apl1), a medium chain (mu-type subunit apm4) and a small adaptin (sigma-type subunit aps2).

It localises to the cell membrane. The protein localises to the membrane. The protein resides in the coated pit. Component of the adaptor complexes which link clathrin to receptors in coated vesicles. Clathrin-associated protein complexes are believed to interact with the cytoplasmic tails of membrane proteins, leading to their selection and concentration. AP50 is a subunit of the plasma membrane adaptor (Potential). This is AP-2 complex subunit mu (apm4) from Schizosaccharomyces pombe (strain 972 / ATCC 24843) (Fission yeast).